The following is a 140-amino-acid chain: uncharacterized protein (140 aa).

A disordered region spans residues 34-88 (PLRWRNRARNREKPHSPRAVSSPATHSLPPSNPCRLTPTLSSARPREGSCPSKCS).

In terms of tissue distribution, expressed in a range of cell lines, including B-cell lymphoma and prostate.

This is an uncharacterized protein from Homo sapiens (Human).